We begin with the raw amino-acid sequence, 229 residues long: Small ribosomal subunit protein uS3 (229 aa).

Residues 39 to 107 (VRQFLIKELK…PAQINISEVR (69 aa)) enclose the KH type-2 domain.

This sequence belongs to the universal ribosomal protein uS3 family. Part of the 30S ribosomal subunit. Forms a tight complex with proteins S10 and S14.

Functionally, binds the lower part of the 30S subunit head. Binds mRNA in the 70S ribosome, positioning it for translation. The protein is Small ribosomal subunit protein uS3 of Photobacterium profundum (strain SS9).